The chain runs to 1235 residues: MRSRSNSGVRLDGYARLVQQTILCYQNPVTGLLSASHDQKDAWVRDNIYSILAVWGLGMAYRKNADRDEDKAKAYELEQNVVKLMRGLLQCMMRQVDKVEKFKHTQSTKDSLHAKYNTATCSTVVGDDQWGHLQVDATSLFLLFLAQMTASGLRIIFTLDEVAFIQNLVFYIEAAYKVADYGMWERGDKTNQGIPELNASSVGVAKAALEAIDELDLFGAHGGRKSVIHVLPDEVEHCQSILFSMLPRASTSKEIDAGLLSIISFPAFAVEDVNLVNVTKNEIISKLQGRYGCCRFLRDGYKTPREDPHRLHYDPAELKLFENIECEWPVFWTYLIIDGIFNGDAVQVQEYREALEGILIRGKDGIHLVPELYAIPPDKVDEEYKNPHTVDRVPLGKLPHLWGQSLYILSSLLAEGFLATGEIDPLNRRFSTSVKPDVVVQVAVLAENSHIKGLLKEHGMTVQSIADVHPIRVQPGRILSHIYAKLGRNKNMKLSGRPYRHIGVLGTSKLYVIRNHIFTFTPQFTDQHHFYLALDNEMIVEMLRIELAYLCTCWRMTGRPTLTFPVTHTMLTNDGSDIHPAVLSTIRKLEDGYFGGARVKLGNLAEFLTTSFYTHLTFLDPDCDEKLFGDITDRSFSPDSEPDLGGYLEDSSPQESQDELDQYISHLLQSTSLKCYLPPLCKKSEDSHFFSAIHSTRDILSVMAKAKGLETTFFPMILPTKVLSGHRKSLNLVDSPQPLLKTTPEYDYQWPRDDHDEVDCEKLVGQLKDCSNLQDQADILYILYVMKGPRWDTNLFGQHGVTVHSLLSELYGKAGLNQEWSLIRYISGLLRKKVEVLAEACADLLSHQKQLTVGLPPEPREKTISTPLPPEELTELIYEASGQDISIAVLTQEIVVYLAMYVRAQPSLFAEMLRLRIGLIIQVMATELARSLNCSGKEASESLMNLSPFDMKSLLHHILSGKEFGVERSVRPIHSSMSSPAISIHEVGHTGATKTERSGITRLRSEMKQMNRRASADEQFFPLGQTMSNSLHSIKSVRSSTPSSPTGTSSTDSGGQHLGWGEQQGQWLRRRRLDGAINRVPVGFYQKVWKILQKCHGLSIDGYVLPSSTTQEMTPCEIKFAVHVESVLNRVSQPEYRQLLVEAIMVLTLLSDTEMDSIGGIIHVDQIVQLANQLFLQDQVSFGTTDILEKDQATGICHLFYDSAPSGAYGTMTYLTKAVASHLQELLPSSGCQMQ.

Positions 636–655 (FSPDSEPDLGGYLEDSSPQE) are disordered. Phosphoserine occurs at positions 695, 729, and 735. Residues 807-837 (LSELYGKAGLNQEWSLIRYISGLLRKKVEVL) are calmodulin-binding. A phosphoserine mark is found at Ser-983, Ser-1015, and Ser-1044. Residues 1033-1060 (SIKSVRSSTPSSPTGTSSTDSGGQHLGW) are disordered. Positions 1039–1055 (SSTPSSPTGTSSTDSGG) are enriched in low complexity. Residues 1059 to 1099 (GWGEQQGQWLRRRRLDGAINRVPVGFYQKVWKILQKCHGLS) are calmodulin-binding. Cys-1232 carries S-farnesyl cysteine lipidation.

Belongs to the phosphorylase b kinase regulatory chain family. Hexadecamer of 4 heterotetramers, each composed of alpha, beta, gamma, and delta subunits. Alpha (PHKA1 or PHKA2) and beta (PHKB) are regulatory subunits, gamma (PHKG1 or PHKG2) is the catalytic subunit, and delta is calmodulin. Although the final Cys may be farnesylated, the terminal tripeptide is probably not removed, and the C-terminus is not methylated.

It is found in the cell membrane. It participates in glycan biosynthesis; glycogen metabolism. By phosphorylation of various serine residues and by calcium. In terms of biological role, phosphorylase b kinase catalyzes the phosphorylation of serine in certain substrates, including troponin I. The alpha chain may bind calmodulin. This chain is Phosphorylase b kinase regulatory subunit alpha, liver isoform (Phka2), found in Mus musculus (Mouse).